A 577-amino-acid polypeptide reads, in one-letter code: Arginine--tRNA ligase (577 aa).

Positions 122 to 132 (PNVAKEMHVGH) match the 'HIGH' region motif.

The protein belongs to the class-I aminoacyl-tRNA synthetase family. In terms of assembly, monomer.

Its subcellular location is the cytoplasm. The enzyme catalyses tRNA(Arg) + L-arginine + ATP = L-arginyl-tRNA(Arg) + AMP + diphosphate. The polypeptide is Arginine--tRNA ligase (Shigella dysenteriae serotype 1 (strain Sd197)).